Reading from the N-terminus, the 21-residue chain is Nucleoside diphosphate kinase (21 aa).

Catalysis depends on histidine 4, which acts as the Pros-phosphohistidine intermediate.

It belongs to the NDK family. As to quaternary structure, homohexamer. Mg(2+) is required as a cofactor.

It is found in the cytoplasm. It carries out the reaction a 2'-deoxyribonucleoside 5'-diphosphate + ATP = a 2'-deoxyribonucleoside 5'-triphosphate + ADP. It catalyses the reaction a ribonucleoside 5'-diphosphate + ATP = a ribonucleoside 5'-triphosphate + ADP. Functionally, major role in the synthesis of nucleoside triphosphates other than ATP. The ATP gamma phosphate is transferred to the NDP beta phosphate via a ping-pong mechanism, using a phosphorylated active-site intermediate. The sequence is that of Nucleoside diphosphate kinase (NDK1) from Candida albicans (Yeast).